The sequence spans 628 residues: Probable alpha-L-arabinofuranosidase A (628 aa).

A signal peptide spans 1-25; sequence MVAFSALSGVSALSLLLCLVQHAHG. 8 N-linked (GlcNAc...) asparagine glycosylation sites follow: Asn-36, Asn-51, Asn-74, Asn-152, Asn-171, Asn-260, Asn-359, and Asn-493.

Belongs to the glycosyl hydrolase 51 family.

It is found in the secreted. It catalyses the reaction Hydrolysis of terminal non-reducing alpha-L-arabinofuranoside residues in alpha-L-arabinosides.. The protein operates within glycan metabolism; L-arabinan degradation. In terms of biological role, alpha-L-arabinofuranosidase involved in the degradation of arabinoxylan, a major component of plant hemicellulose. Acts only on small linear 1,5-alpha-linked L-arabinofuranosyl oligosaccharides. The chain is Probable alpha-L-arabinofuranosidase A (abfA) from Aspergillus awamori (Black koji mold).